A 629-amino-acid polypeptide reads, in one-letter code: Ionotropic receptor 75a (629 aa).

The Extracellular portion of the chain corresponds to 1–335; it reads MQLVQLANFV…GDVFLQPFSP (335 aa). 6 N-linked (GlcNAc...) asparagine glycosylation sites follow: Asn-61, Asn-112, Asn-126, Asn-144, Asn-166, and Asn-232. A helical membrane pass occupies residues 336–356; the sequence is LVWYLFGGVLSLIGVLLWITF. Topologically, residues 357 to 374 are cytoplasmic; the sequence is YMECKRMQKRWRLDYLPS. A helical membrane pass occupies residues 375–395; it reads LLSTFLISFGAACIQSSSLIP. At 396 to 402 the chain is on the extracellular side; sequence RSAGGRL. A helical membrane pass occupies residues 403-423; sequence IYFALFLISFIMYNYYTSVVV. Over 424 to 592 the chain is Cytoplasmic; it reads SSLLSSPVKS…NFVITVGMEY (169 aa). The chain crosses the membrane as a helical span at residues 593-613; that stretch reads VAPLLLMLICADILVVVILLV. The Extracellular portion of the chain corresponds to 614–629; it reads ELAWKRFFTRPLTIHP.

This sequence belongs to the glutamate-gated ion channel (TC 1.A.10.1) family. Expressed in neurons in the antennal coeloconic 2 (ac2) sensillum class of sensory hairs (at protein level).

The protein resides in the cell membrane. It is found in the cell projection. Its subcellular location is the dendrite. Functionally, olfactory receptor for propionic, butyric and 2-oxopentanoic acids. The chain is Ionotropic receptor 75a from Drosophila sechellia (Fruit fly).